The chain runs to 382 residues: ATP phosphoribosyltransferase regulatory subunit (382 aa).

The protein belongs to the class-II aminoacyl-tRNA synthetase family. HisZ subfamily. Heteromultimer composed of HisG and HisZ subunits.

It is found in the cytoplasm. It functions in the pathway amino-acid biosynthesis; L-histidine biosynthesis; L-histidine from 5-phospho-alpha-D-ribose 1-diphosphate: step 1/9. Functionally, required for the first step of histidine biosynthesis. May allow the feedback regulation of ATP phosphoribosyltransferase activity by histidine. The chain is ATP phosphoribosyltransferase regulatory subunit from Burkholderia pseudomallei (strain 668).